A 181-amino-acid polypeptide reads, in one-letter code: Large ribosomal subunit protein uL10 (181 aa).

It belongs to the universal ribosomal protein uL10 family. Part of the ribosomal stalk of the 50S ribosomal subunit. The N-terminus interacts with L11 and the large rRNA to form the base of the stalk. The C-terminus forms an elongated spine to which L12 dimers bind in a sequential fashion forming a multimeric L10(L12)X complex.

Forms part of the ribosomal stalk, playing a central role in the interaction of the ribosome with GTP-bound translation factors. The protein is Large ribosomal subunit protein uL10 of Amoebophilus asiaticus (strain 5a2).